A 163-amino-acid chain; its full sequence is NADH-quinone oxidoreductase subunit I (163 aa).

2 consecutive 4Fe-4S ferredoxin-type domains span residues leucine 54–glutamate 84 and threonine 94–isoleucine 123. Residues cysteine 64, cysteine 67, cysteine 70, cysteine 74, cysteine 103, cysteine 106, cysteine 109, and cysteine 113 each contribute to the [4Fe-4S] cluster site.

The protein belongs to the complex I 23 kDa subunit family. As to quaternary structure, NDH-1 is composed of 14 different subunits. Subunits NuoA, H, J, K, L, M, N constitute the membrane sector of the complex. Requires [4Fe-4S] cluster as cofactor.

The protein resides in the cell inner membrane. It carries out the reaction a quinone + NADH + 5 H(+)(in) = a quinol + NAD(+) + 4 H(+)(out). NDH-1 shuttles electrons from NADH, via FMN and iron-sulfur (Fe-S) centers, to quinones in the respiratory chain. The immediate electron acceptor for the enzyme in this species is believed to be ubiquinone. Couples the redox reaction to proton translocation (for every two electrons transferred, four hydrogen ions are translocated across the cytoplasmic membrane), and thus conserves the redox energy in a proton gradient. The polypeptide is NADH-quinone oxidoreductase subunit I (Methylobacillus flagellatus (strain ATCC 51484 / DSM 6875 / VKM B-1610 / KT)).